A 192-amino-acid chain; its full sequence is Acetyltransferase PA3944 (192 aa).

An N-acetyltransferase domain is found at 18–187 (LLLRAWRDSD…RHILYRVDAA (170 aa)). Residues 105–107 (WRL), G113, N145, and 150–152 (GLM) contribute to the CoA site.

In terms of biological role, catalyzes the transfer of an acetyl group from acetyl coenzyme A (AcCoA) to an acceptor substrate and releases both CoA and the acetylated product. It prefers the peptide Asp-Phe methyl ester (or aspartame) and the peptide antibiotics polymyxin B and colistin. Other substrates like dopamine, serotonin, puromycin, chloramphenicol, D-glucosamine, glycine and N-alpha-acetyl-L-glutamine are used and displayed lower activity. The polypeptide is Acetyltransferase PA3944 (Pseudomonas aeruginosa (strain ATCC 15692 / DSM 22644 / CIP 104116 / JCM 14847 / LMG 12228 / 1C / PRS 101 / PAO1)).